The primary structure comprises 189 residues: Resolvase (189 aa).

The region spanning 1–139 (MLVGYARVST…EGLRSAKARG (139 aa)) is the Resolvase/invertase-type recombinase catalytic domain. Ser-9 functions as the O-(5'-phospho-DNA)-serine intermediate in the catalytic mechanism. A disordered region spans residues 130 to 151 (EGLRSAKARGRNGGRPSKRNDK). The H-T-H motif DNA-binding region spans 165 to 184 (IVDIVKQTELSRATVYRILK).

Belongs to the site-specific recombinase resolvase family.

A likely role for the res protein would be to stabilize pCP13 by reducing the number of plasmid multimers resulting from homologous recombination. The sequence is that of Resolvase (res) from Clostridium perfringens (strain 13 / Type A).